Consider the following 551-residue polypeptide: Arginine--tRNA ligase (551 aa).

The 'HIGH' region motif lies at 123–133; sequence ANPTGPLTIGR.

Belongs to the class-I aminoacyl-tRNA synthetase family. In terms of assembly, monomer.

It is found in the cytoplasm. It carries out the reaction tRNA(Arg) + L-arginine + ATP = L-arginyl-tRNA(Arg) + AMP + diphosphate. In Chlorobium limicola (strain DSM 245 / NBRC 103803 / 6330), this protein is Arginine--tRNA ligase.